The chain runs to 222 residues: Putative cobalt transport protein CbiM (222 aa).

Transmembrane regions (helical) follow at residues 8–28 (LPMEWAIVWYIISAIVVGYGI), 43–63 (PLLAISGAFMFVLSSLKLPSV), 75–95 (LGAILFGPAITSVLATIVLLF), 107–127 (TLGANIFSMGIMGPFVGYLVF), 134–154 (LNITWVVMLTAIFADWATYLT), and 178–198 (IFAITQIPLAIAEGLITALLW).

Belongs to the CbiM family. In terms of assembly, forms an energy-coupling factor (ECF) transporter complex composed of an ATP-binding protein (A component, CbiO), a transmembrane protein (T component, CbiQ) and 2 possible substrate-capture proteins (S components, CbiM and CbiN) of unknown stoichimetry.

The protein resides in the cell membrane. Its pathway is cofactor biosynthesis; adenosylcobalamin biosynthesis. In terms of biological role, part of the energy-coupling factor (ECF) transporter complex CbiMNOQ involved in cobalt import. This Methanococcus voltae (strain ATCC BAA-1334 / A3) protein is Putative cobalt transport protein CbiM.